An 84-amino-acid chain; its full sequence is Esculentin-1SIa (84 aa).

An N-terminal signal peptide occupies residues 1-22 (MFTLKKPLLLIVLLGIISLSLC). Positions 23–36 (EQERAADEDEGSEI) are cleaved as a propeptide — removed in mature form. C78 and C84 are oxidised to a cystine.

As to expression, expressed by the skin glands.

Its subcellular location is the secreted. In terms of biological role, has antimicrobial activity against Gram-negative bacterium E.coli ATCC 8739 (MIC=6.3 ug), against Gram positive bacteria S.aureus ATCC 6538 (MIC=3.1 ug), methicillin-resistant S.aureus ATCC 43300 (MIC=25 ug) and B.subtilis ATCC 6633 (MIC=25 ug). Has no activity against fungus C.albicans ATCC 90028. This Odorrana ishikawae (Ishikawa's frog) protein is Esculentin-1SIa.